The following is a 282-amino-acid chain: Putative phosphoenolpyruvate synthase regulatory protein (282 aa).

Residue 162–169 participates in ADP binding; sequence GVSRSGKT.

Belongs to the pyruvate, phosphate/water dikinase regulatory protein family. PSRP subfamily.

It carries out the reaction [pyruvate, water dikinase] + ADP = [pyruvate, water dikinase]-phosphate + AMP + H(+). The enzyme catalyses [pyruvate, water dikinase]-phosphate + phosphate + H(+) = [pyruvate, water dikinase] + diphosphate. Its function is as follows. Bifunctional serine/threonine kinase and phosphorylase involved in the regulation of the phosphoenolpyruvate synthase (PEPS) by catalyzing its phosphorylation/dephosphorylation. The polypeptide is Putative phosphoenolpyruvate synthase regulatory protein (Psychrobacter arcticus (strain DSM 17307 / VKM B-2377 / 273-4)).